Here is a 274-residue protein sequence, read N- to C-terminus: Large ribosomal subunit protein uL2 (274 aa).

The interval 1–23 is disordered; it reads MAIKIYRPTSPGRRHHSVSSFEE.

This sequence belongs to the universal ribosomal protein uL2 family. In terms of assembly, part of the 50S ribosomal subunit. Forms a bridge to the 30S subunit in the 70S ribosome.

Functionally, one of the primary rRNA binding proteins. Required for association of the 30S and 50S subunits to form the 70S ribosome, for tRNA binding and peptide bond formation. It has been suggested to have peptidyltransferase activity; this is somewhat controversial. Makes several contacts with the 16S rRNA in the 70S ribosome. The chain is Large ribosomal subunit protein uL2 from Dehalococcoides mccartyi (strain ATCC BAA-2100 / JCM 16839 / KCTC 5957 / BAV1).